Here is a 1243-residue protein sequence, read N- to C-terminus: Serine/threonine-protein kinase/endoribonuclease IRE1 (1243 aa).

A signal peptide spans 1-35; the sequence is MMRRPPSQGRWSASHQKLLLAFAFILIPWLQLADA. At 36 to 585 the chain is on the lumenal side; the sequence is QQQPQQPQIR…VKALPQSAAN (550 aa). Disordered stretches follow at residues 70 to 132 and 149 to 172; these read HAAP…KPNY and QPVR…GLAS. Residues 73-85 are compositionally biased toward basic and acidic residues; it reads PDVHPEAKFDTVN. Residues 90-99 are compositionally biased toward polar residues; it reads QQSTASPQQH. Residues 163–172 show a composition bias toward low complexity; it reads SSSAASGLAS. N226, N470, and N554 each carry an N-linked (GlcNAc...) asparagine glycan. The helical transmembrane segment at 586–606 threads the bilayer; the sequence is SVIDFVSNPILIIFLIGSLIY. Residues 607–1243 are Cytoplasmic-facing; that stretch reads NEKKLRRSYH…FREYYEPAGL (637 aa). The segment at 638–765 is disordered; the sequence is GDESGDDKDG…QSHENDPALT (128 aa). Residues 650–660 are compositionally biased toward low complexity; the sequence is PSSPSPRSQPQ. The span at 674–693 shows a compositional bias: basic and acidic residues; sequence ERNAGDQDKVKDNRSLHDVS. The span at 732-749 shows a compositional bias: basic residues; the sequence is KKKKAHRGRRGGVKHRKG. The region spanning 809–1105 is the Protein kinase domain; the sequence is VDTDVELGMG…SREVMAHPFF (297 aa). ATP-binding positions include 815-823 and K837; that span reads LGMGSNGTV. ADP contacts are provided by S819, K837, E881, and C883. D931 serves as the catalytic Proton acceptor. 2 residues coordinate Mg(2+): N936 and D953. The KEN domain occupies 1108–1240; it reads PKKRLAFLCD…TDRFREYYEP (133 aa).

It belongs to the protein kinase superfamily. Ser/Thr protein kinase family. Requires Mg(2+) as cofactor. In terms of processing, autophosphorylated mainly on serine residues; phosphorylation enables nucleotide binding by the active site.

It is found in the endoplasmic reticulum membrane. The enzyme catalyses L-seryl-[protein] + ATP = O-phospho-L-seryl-[protein] + ADP + H(+). It carries out the reaction L-threonyl-[protein] + ATP = O-phospho-L-threonyl-[protein] + ADP + H(+). Functionally, senses unfolded proteins in the lumen of the endoplasmic reticulum via its N-terminal domain which leads to enzyme auto-activation. The active endoribonuclease domain splices precursor mRNAs to produce their mature form which then induces transcription of UPR target genes. This is Serine/threonine-protein kinase/endoribonuclease IRE1 from Hypocrea jecorina (strain QM6a) (Trichoderma reesei).